The chain runs to 281 residues: Probable feruloyl esterase A (281 aa).

An N-terminal signal peptide occupies residues 1–21 (MKQFSAKFALALSAAAGQALA). Intrachain disulfides connect Cys50-Cys279, Cys112-Cys115, and Cys248-Cys255. Residue Asp98 participates in substrate binding. An N-linked (GlcNAc...) asparagine glycan is attached at Asn100. Tyr101 lines the substrate pocket. Residue Ser154 is the Nucleophile of the active site. Residue Asn173 is glycosylated (N-linked (GlcNAc...) asparagine). Asp215 serves as the catalytic Charge relay system. His268 lines the substrate pocket. His268 acts as the Charge relay system in catalysis.

Belongs to the AB hydrolase superfamily. FaeA family.

The protein resides in the secreted. The catalysed reaction is feruloyl-polysaccharide + H2O = ferulate + polysaccharide.. Functionally, involved in degradation of plant cell walls. Hydrolyzes the feruloyl-arabinose ester bond in arabinoxylans, and the feruloyl-galactose ester bond in pectin. This chain is Probable feruloyl esterase A (faeA), found in Aspergillus terreus (strain NIH 2624 / FGSC A1156).